The sequence spans 153 residues: Endoribonuclease YbeY (153 aa).

3 residues coordinate Zn(2+): His118, His122, and His128.

The protein belongs to the endoribonuclease YbeY family. Zn(2+) is required as a cofactor.

The protein resides in the cytoplasm. In terms of biological role, single strand-specific metallo-endoribonuclease involved in late-stage 70S ribosome quality control and in maturation of the 3' terminus of the 16S rRNA. In Staphylococcus saprophyticus subsp. saprophyticus (strain ATCC 15305 / DSM 20229 / NCIMB 8711 / NCTC 7292 / S-41), this protein is Endoribonuclease YbeY.